The chain runs to 98 residues: Plastocyanin (98 aa).

Residues 1 to 98 (AQIVKLGGDD…AGMKMTITVQ (98 aa)) form the Plastocyanin-like domain. Cu cation contacts are provided by His38, Cys83, His86, and Met91.

The protein belongs to the plastocyanin family. Requires Cu(2+) as cofactor.

Its subcellular location is the plastid. It localises to the chloroplast thylakoid membrane. Its function is as follows. Participates in electron transfer between P700 and the cytochrome b6-f complex in photosystem I. The chain is Plastocyanin (PETE) from Ulva arasakii (Sea lettuce).